Consider the following 82-residue polypeptide: Small ribosomal subunit protein uS17 (82 aa).

It belongs to the universal ribosomal protein uS17 family. As to quaternary structure, part of the 30S ribosomal subunit.

Its function is as follows. One of the primary rRNA binding proteins, it binds specifically to the 5'-end of 16S ribosomal RNA. In Xanthobacter autotrophicus (strain ATCC BAA-1158 / Py2), this protein is Small ribosomal subunit protein uS17.